Here is a 230-residue protein sequence, read N- to C-terminus: 7-cyano-7-deazaguanine synthase (230 aa).

8–18 is a binding site for ATP; the sequence is LSGGMDSAVVT. Zn(2+) contacts are provided by Cys186, Cys196, Cys199, and Cys202.

It belongs to the QueC family. Zn(2+) is required as a cofactor.

It catalyses the reaction 7-carboxy-7-deazaguanine + NH4(+) + ATP = 7-cyano-7-deazaguanine + ADP + phosphate + H2O + H(+). The protein operates within purine metabolism; 7-cyano-7-deazaguanine biosynthesis. In terms of biological role, catalyzes the ATP-dependent conversion of 7-carboxy-7-deazaguanine (CDG) to 7-cyano-7-deazaguanine (preQ(0)). The protein is 7-cyano-7-deazaguanine synthase of Xylella fastidiosa (strain 9a5c).